The following is a 160-amino-acid chain: SsrA-binding protein (160 aa).

Positions 132–160 are disordered; sequence KEFDKRDTMRERDSNRELQRAVRNKGKEE.

It belongs to the SmpB family.

The protein localises to the cytoplasm. In terms of biological role, required for rescue of stalled ribosomes mediated by trans-translation. Binds to transfer-messenger RNA (tmRNA), required for stable association of tmRNA with ribosomes. tmRNA and SmpB together mimic tRNA shape, replacing the anticodon stem-loop with SmpB. tmRNA is encoded by the ssrA gene; the 2 termini fold to resemble tRNA(Ala) and it encodes a 'tag peptide', a short internal open reading frame. During trans-translation Ala-aminoacylated tmRNA acts like a tRNA, entering the A-site of stalled ribosomes, displacing the stalled mRNA. The ribosome then switches to translate the ORF on the tmRNA; the nascent peptide is terminated with the 'tag peptide' encoded by the tmRNA and targeted for degradation. The ribosome is freed to recommence translation, which seems to be the essential function of trans-translation. This chain is SsrA-binding protein, found in Pseudomonas putida (strain ATCC 47054 / DSM 6125 / CFBP 8728 / NCIMB 11950 / KT2440).